The sequence spans 245 residues: Phosducin (245 aa).

The segment at 1–70 (MEKAKSQSLE…DKDSKERFSR (70 aa)) is disordered. A Phosducin domain is found at 1–244 (MEKAKSQSLE…LEQTNMEEDM (244 aa)). 2 stretches are compositionally biased toward basic and acidic residues: residues 28–50 (DWRKFKLESEDSDSVAHSKKEIL) and 58–69 (SRDDKDSKERFS). The residue at position 73 (Ser-73) is a Phosphoserine; by PKA. Residues 111 to 245 (YGFVYELESG…EQTNMEEDME (135 aa)) form a thioredoxin fold region.

The protein belongs to the phosducin family. As to quaternary structure, interacts with CRX. Forms a complex with the beta and gamma subunits of the GTP-binding protein, transducin. Post-translationally, light-induced changes in cyclic nucleotide levels modulate the phosphorylation of this protein by cAMP kinase.

The protein localises to the cytoplasm. It localises to the cytosol. The protein resides in the nucleus. It is found in the cell projection. Its subcellular location is the cilium. The protein localises to the photoreceptor outer segment. It localises to the photoreceptor inner segment. Its function is as follows. Inhibits the transcriptional activation activity of the cone-rod homeobox CRX. May participate in the regulation of visual phototransduction or in the integration of photoreceptor metabolism. This chain is Phosducin (PDC), found in Bos taurus (Bovine).